A 31-amino-acid chain; its full sequence is Photosystem II reaction center protein T (31 aa).

Residues 3–23 form a helical membrane-spanning segment; that stretch reads ALVYTFLLVGTLGIIFFAIFF.

The protein belongs to the PsbT family. PSII is composed of 1 copy each of membrane proteins PsbA, PsbB, PsbC, PsbD, PsbE, PsbF, PsbH, PsbI, PsbJ, PsbK, PsbL, PsbM, PsbT, PsbY, PsbZ, Psb30/Ycf12, at least 3 peripheral proteins of the oxygen-evolving complex and a large number of cofactors. It forms dimeric complexes.

The protein localises to the plastid. It localises to the chloroplast thylakoid membrane. Functionally, found at the monomer-monomer interface of the photosystem II (PS II) dimer, plays a role in assembly and dimerization of PSII. PSII is a light-driven water plastoquinone oxidoreductase, using light energy to abstract electrons from H(2)O, generating a proton gradient subsequently used for ATP formation. In Chlorella vulgaris (Green alga), this protein is Photosystem II reaction center protein T.